Reading from the N-terminus, the 519-residue chain is Ribonuclease Y (519 aa).

Residues leucine 3–valine 23 traverse the membrane as a helical segment. The 61-residue stretch at threonine 209 to leucine 269 folds into the KH domain. One can recognise an HD domain in the interval valine 335 to alanine 428.

It belongs to the RNase Y family.

It is found in the cell membrane. Endoribonuclease that initiates mRNA decay. The protein is Ribonuclease Y of Staphylococcus epidermidis (strain ATCC 35984 / DSM 28319 / BCRC 17069 / CCUG 31568 / BM 3577 / RP62A).